A 428-amino-acid polypeptide reads, in one-letter code: Adenylosuccinate synthetase (428 aa).

Residues 12-18 and 40-42 contribute to the GTP site; these read GDEGKGK and GHT. The active-site Proton acceptor is the Asp13. Mg(2+) is bound by residues Asp13 and Gly40. Residues 13–16, 38–41, Thr130, Arg144, Gln225, Thr240, and Arg304 contribute to the IMP site; these read DEGK and NAGH. His41 acts as the Proton donor in catalysis. Residue 300–306 participates in substrate binding; it reads VTTGRAR. Residues Arg306, 332–334, and 414–416 contribute to the GTP site; these read KID and SVG.

Belongs to the adenylosuccinate synthetase family. As to quaternary structure, homodimer. The cofactor is Mg(2+).

It is found in the cytoplasm. It carries out the reaction IMP + L-aspartate + GTP = N(6)-(1,2-dicarboxyethyl)-AMP + GDP + phosphate + 2 H(+). It participates in purine metabolism; AMP biosynthesis via de novo pathway; AMP from IMP: step 1/2. Functionally, plays an important role in the de novo pathway of purine nucleotide biosynthesis. Catalyzes the first committed step in the biosynthesis of AMP from IMP. This Clostridium botulinum (strain ATCC 19397 / Type A) protein is Adenylosuccinate synthetase.